The primary structure comprises 959 residues: Glycine dehydrogenase (decarboxylating) (959 aa).

An N6-(pyridoxal phosphate)lysine modification is found at Lys-708.

The protein belongs to the GcvP family. As to quaternary structure, the glycine cleavage system is composed of four proteins: P, T, L and H. Pyridoxal 5'-phosphate serves as cofactor.

The enzyme catalyses N(6)-[(R)-lipoyl]-L-lysyl-[glycine-cleavage complex H protein] + glycine + H(+) = N(6)-[(R)-S(8)-aminomethyldihydrolipoyl]-L-lysyl-[glycine-cleavage complex H protein] + CO2. Its function is as follows. The glycine cleavage system catalyzes the degradation of glycine. The P protein binds the alpha-amino group of glycine through its pyridoxal phosphate cofactor; CO(2) is released and the remaining methylamine moiety is then transferred to the lipoamide cofactor of the H protein. In Yersinia enterocolitica serotype O:8 / biotype 1B (strain NCTC 13174 / 8081), this protein is Glycine dehydrogenase (decarboxylating).